The sequence spans 177 residues: Large ribosomal subunit protein uL6 (177 aa).

This sequence belongs to the universal ribosomal protein uL6 family. Part of the 50S ribosomal subunit.

This protein binds to the 23S rRNA, and is important in its secondary structure. It is located near the subunit interface in the base of the L7/L12 stalk, and near the tRNA binding site of the peptidyltransferase center. The protein is Large ribosomal subunit protein uL6 of Cereibacter sphaeroides (strain ATCC 17025 / ATH 2.4.3) (Rhodobacter sphaeroides).